Consider the following 557-residue polypeptide: Interferon alpha/beta receptor 1 (557 aa).

The signal sequence occupies residues 1-27 (MMVVLLGATTLVLVAVAPWVLSAAAGG). The Extracellular segment spans residues 28-436 (KNLKSPQKVE…EKTKPGNTSK (409 aa)). 4 Fibronectin type-III domains span residues 32 to 126 (SPQK…FRKA), 127 to 227 (QIGP…TVEN), 231 to 329 (PPEN…TEIQ), and 331 to 432 (FLLP…TKPG). Residues Asn-50, Asn-58, Asn-81, Asn-88, Asn-110, and Asn-172 are each glycosylated (N-linked (GlcNAc...) asparagine). Cys-79 and Cys-87 are disulfide-bonded. The cysteines at positions 199 and 220 are disulfide-linked. A glycan (N-linked (GlcNAc...) asparagine) is linked at Asn-254. Residues Cys-283 and Cys-291 are joined by a disulfide bond. N-linked (GlcNAc...) asparagine glycosylation is found at Asn-313, Asn-314, Asn-376, Asn-416, and Asn-433. Cys-403 and Cys-426 are joined by a disulfide. A helical transmembrane segment spans residues 437–457 (IWLIVGICIALFALPFVIYAA). Topologically, residues 458-557 (KVFLRCINYV…TSEELQQDFV (100 aa)) are cytoplasmic. Residue Cys-463 is the site of S-palmitoyl cysteine attachment. Residues Tyr-466 and Tyr-481 each carry the phosphotyrosine; by TYK2 modification. Positions 491–500 (LLSTSEEQIE) are important for interaction with TYK2. The residue at position 495 (Ser-495) is a Phosphoserine. Residues Lys-501, Lys-525, and Lys-526 each participate in a glycyl lysine isopeptide (Lys-Gly) (interchain with G-Cter in ubiquitin) cross-link. Residues 516 to 557 (ETNQTDEDHKKYSSQTSQDSGNYSNEDESESKTSEELQQDFV) form a disordered region. The span at 528–539 (SSQTSQDSGNYS) shows a compositional bias: polar residues. A Phosphoserine modification is found at Ser-535.

Belongs to the type II cytokine receptor family. In terms of assembly, heterodimer with IFNAR2; forming the receptor for type I interferon. Interacts with TYK2. Interacts with STAT1 and STAT2; the interaction requires its phosphorylation at Tyr-466. Interacts (serine-phosphorylated form) with FBXW11, the substrate recognition component of a SCF (SKP1-CUL1-F-box protein) E3 ubiquitin-protein ligase complex. Interacts with SHMT2; this promotes interaction with ABRAXAS2 and the BRISC complex. Interacts with TRIM10; this interaction prevents association between IFNAR1 and TYK2. In terms of processing, ubiquitinated, leading to its internalization and degradation. Polyubiquitinated via 'Lys-48'-linked and 'Lys-63'-linked ubiquitin chains, leading to receptor internalization and lysosomal degradation. The 'Lys-63'-linked ubiquitin chains are cleaved off by the BRISC complex. Phosphorylated on tyrosine residues in response to interferon-binding: phosphorylation by TYK2 tyrosine kinase creates docking sites for STAT proteins. Phosphorylated on serine residues in response to interferon binding; this promotes interaction with FBXW11 and ubiquitination. Post-translationally, palmitoylation at Cys-463 is required for the activation of STAT1 and STAT2. In terms of tissue distribution, IFN receptors are present in all tissues and even on the surface of most IFN-resistant cells. Isoform 1, isoform 2 and isoform 3 are expressed in the IFN-alpha sensitive myeloma cell line U266B1. Isoform 2 and isoform 3 are expressed in the IFN-alpha resistant myeloma cell line U266R. Isoform 1 is not expressed in IFN-alpha resistant myeloma cell line U266R.

It localises to the cell membrane. The protein localises to the late endosome. The protein resides in the lysosome. Together with IFNAR2, forms the heterodimeric receptor for type I interferons (including interferons alpha, beta, epsilon, omega and kappa). Type I interferon binding activates the JAK-STAT signaling cascade, resulting in transcriptional activation or repression of interferon-regulated genes that encode the effectors of the interferon response. Mechanistically, type I interferon-binding brings the IFNAR1 and IFNAR2 subunits into close proximity with one another, driving their associated Janus kinases (JAKs) (TYK2 bound to IFNAR1 and JAK1 bound to IFNAR2) to cross-phosphorylate one another. The activated kinases phosphorylate specific tyrosine residues on the intracellular domains of IFNAR1 and IFNAR2, forming docking sites for the STAT transcription factors. STAT proteins are then phosphorylated by the JAKs, promoting their translocation into the nucleus to regulate expression of interferon-regulated genes. Can also act independently of IFNAR2: form an active IFNB1 receptor by itself and activate a signaling cascade that does not involve activation of the JAK-STAT pathway. This Homo sapiens (Human) protein is Interferon alpha/beta receptor 1 (IFNAR1).